The sequence spans 91 residues: Small ribosomal subunit protein uS17 (91 aa).

This sequence belongs to the universal ribosomal protein uS17 family. As to quaternary structure, part of the 30S ribosomal subunit.

Its function is as follows. One of the primary rRNA binding proteins, it binds specifically to the 5'-end of 16S ribosomal RNA. The sequence is that of Small ribosomal subunit protein uS17 from Acidithiobacillus ferrooxidans (strain ATCC 23270 / DSM 14882 / CIP 104768 / NCIMB 8455) (Ferrobacillus ferrooxidans (strain ATCC 23270)).